Here is a 1602-residue protein sequence, read N- to C-terminus: MAP kinase-activating death domain protein (1602 aa).

One can recognise a uDENN domain in the interval Tyr-13–Asp-267. Residues Pro-105 to Ala-121 show a composition bias toward basic and acidic residues. Residues Pro-105–Arg-167 form a disordered region. The span at Ala-126–Ser-137 shows a compositional bias: low complexity. The span at Gly-138–Pro-156 shows a compositional bias: polar residues. Position 155 is a phosphoserine (Ser-155). Positions Arg-157–Asn-166 are enriched in basic residues. In terms of domain architecture, cDENN spans Arg-288 to Lys-428. The 135-residue stretch at Ala-430–Arg-564 folds into the dDENN domain. 2 disordered regions span residues Ala-603–Ser-635 and Gln-676–Glu-840. The span at Ser-614–Asp-629 shows a compositional bias: acidic residues. 2 positions are modified to phosphoserine: Ser-688 and Ser-691. A compositionally biased stretch (polar residues) spans Ser-688–Arg-698. The span at Ser-699 to Thr-711 shows a compositional bias: low complexity. The residue at position 778 (Ser-778) is a Phosphoserine. A compositionally biased stretch (polar residues) spans Glu-789–Arg-803. Phosphoserine is present on residues Ser-812, Ser-817, and Ser-819. A compositionally biased stretch (low complexity) spans Arg-826–Thr-839. Phosphoserine is present on residues Ser-857, Ser-861, Ser-895, Ser-900, and Ser-909. 3 disordered regions span residues Lys-870 to Asn-920, Lys-1030 to Ser-1089, and Thr-1113 to Glu-1231. The span at Gln-911 to Asn-920 shows a compositional bias: polar residues. Ser-1038 carries the post-translational modification Phosphoserine. A phosphothreonine mark is found at Thr-1040 and Thr-1045. Ser-1089 carries the post-translational modification Phosphoserine. A compositionally biased stretch (polar residues) spans Gln-1119–Arg-1134. Positions Ser-1151–Ser-1162 are enriched in low complexity. Over residues Ser-1191–Ile-1209 the composition is skewed to polar residues. Thr-1194 bears the Phosphothreonine mark. Ser-1196 and Ser-1225 each carry phosphoserine. Residues Gly-1295 to Glu-1370 enclose the Death domain.

This sequence belongs to the MADD family. In terms of assembly, interacts (via death domain) with TNFRSF1A (via death domain). Interacts with PIDD1. Interacts with YWHAZ. Interacts (via death domain) with KIF1B; links the motor KIF1B to Rab3-carrying vesicles in anterograde synaptic vesicle transport. Interacts with KIF1A. Interacts (via uDENN domain) with RAB3A, RAB3B, RAB3C and RAB3D; the GTP-bound form of the Rab proteins is preferred for interaction. Expressed in all tissues examined with the highest expression in brain.

The protein localises to the cell membrane. It localises to the cytoplasm. The protein resides in the cell projection. Its subcellular location is the axon. Its function is as follows. Guanyl-nucleotide exchange factor that regulates small GTPases of the Rab family. Converts GDP-bound inactive form of RAB27A and RAB27B to the GTP-bound active forms. Converts GDP-bound inactive form of RAB3A, RAB3C and RAB3D to the GTP-bound active forms, GTPases involved in synaptic vesicle exocytosis and vesicle secretion. Plays a role in synaptic vesicle formation and in vesicle trafficking at the neuromuscular junction. Involved in up-regulating a post-docking step of synaptic exocytosis in central synapses. Probably by binding to the motor proteins KIF1B and KIF1A, mediates motor-dependent transport of GTP-RAB3A-positive vesicles to the presynaptic nerve terminals. Plays a role in TNFA-mediated activation of the MAPK pathway, including ERK1/2. May link TNFRSF1A with MAP kinase activation. May be involved in the regulation of TNFA-induced apoptosis. This is MAP kinase-activating death domain protein from Rattus norvegicus (Rat).